Here is a 308-residue protein sequence, read N- to C-terminus: Ornithine carbamoyltransferase (308 aa).

Carbamoyl phosphate is bound by residues 55-58, glutamine 82, arginine 106, and 133-136; these read STRT and HPCQ. L-ornithine is bound by residues asparagine 164, aspartate 227, and 231–232; that span reads SM. Carbamoyl phosphate is bound by residues 267–268 and arginine 295; that span reads CL.

This sequence belongs to the aspartate/ornithine carbamoyltransferase superfamily. OTCase family.

The protein localises to the cytoplasm. The catalysed reaction is carbamoyl phosphate + L-ornithine = L-citrulline + phosphate + H(+). It participates in amino-acid biosynthesis; L-arginine biosynthesis; L-arginine from L-ornithine and carbamoyl phosphate: step 1/3. Its function is as follows. Reversibly catalyzes the transfer of the carbamoyl group from carbamoyl phosphate (CP) to the N(epsilon) atom of ornithine (ORN) to produce L-citrulline. The sequence is that of Ornithine carbamoyltransferase from Prochlorococcus marinus (strain MIT 9312).